The primary structure comprises 260 residues: Hydroxyethylthiazole kinase 1 (260 aa).

Met39 contributes to the substrate binding site. ATP contacts are provided by Arg115 and Thr160. Gly187 contributes to the substrate binding site.

The protein belongs to the Thz kinase family. It depends on Mg(2+) as a cofactor.

The catalysed reaction is 5-(2-hydroxyethyl)-4-methylthiazole + ATP = 4-methyl-5-(2-phosphooxyethyl)-thiazole + ADP + H(+). It functions in the pathway cofactor biosynthesis; thiamine diphosphate biosynthesis; 4-methyl-5-(2-phosphoethyl)-thiazole from 5-(2-hydroxyethyl)-4-methylthiazole: step 1/1. Its function is as follows. Catalyzes the phosphorylation of the hydroxyl group of 4-methyl-5-beta-hydroxyethylthiazole (THZ). In Streptococcus pneumoniae (strain Hungary19A-6), this protein is Hydroxyethylthiazole kinase 1.